We begin with the raw amino-acid sequence, 307 residues long: Homoserine O-acetyltransferase (307 aa).

The active-site Acyl-thioester intermediate is the cysteine 142. Residues lysine 163 and serine 192 each coordinate substrate. The Proton acceptor role is filled by histidine 235. Glutamate 237 is a catalytic residue. Residue arginine 249 coordinates substrate.

This sequence belongs to the MetA family.

It localises to the cytoplasm. The enzyme catalyses L-homoserine + acetyl-CoA = O-acetyl-L-homoserine + CoA. Its pathway is amino-acid biosynthesis; L-methionine biosynthesis via de novo pathway; O-acetyl-L-homoserine from L-homoserine: step 1/1. Functionally, transfers an acetyl group from acetyl-CoA to L-homoserine, forming acetyl-L-homoserine. This is Homoserine O-acetyltransferase from Rhizobium johnstonii (strain DSM 114642 / LMG 32736 / 3841) (Rhizobium leguminosarum bv. viciae).